Here is a 139-residue protein sequence, read N- to C-terminus: Cuticle protein 76 (139 aa).

A run of 6 repeats spans residues Ala7–Ala10, Ala68–Ala71, Ala75–Val78, Ala93–Pro95, Ala105–Ala108, and Ala121–Ala124.

Component of the cuticle of migratory locust which contains more than 100 different structural proteins. The chain is Cuticle protein 76 from Locusta migratoria (Migratory locust).